The following is a 618-amino-acid chain: GMC oxidoreductase family protein Mala s 12 (618 aa).

A signal peptide spans 1–23 (MKGIVSWAVVSAALVLSATESLA). FAD-binding residues include V129 and V280. The active-site Proton donor is the H556. The Proton acceptor role is filled by H599.

The protein belongs to the GMC oxidoreductase family. Monomer. It depends on FAD as a cofactor.

The protein resides in the secreted. This Malassezia sympodialis (strain ATCC 42132) (Atopic eczema-associated yeast) protein is GMC oxidoreductase family protein Mala s 12.